Reading from the N-terminus, the 229-residue chain is Putative N-acetylmannosamine-6-phosphate 2-epimerase (229 aa).

The protein belongs to the NanE family.

It catalyses the reaction an N-acyl-D-glucosamine 6-phosphate = an N-acyl-D-mannosamine 6-phosphate. Its pathway is amino-sugar metabolism; N-acetylneuraminate degradation; D-fructose 6-phosphate from N-acetylneuraminate: step 3/5. Its function is as follows. Converts N-acetylmannosamine-6-phosphate (ManNAc-6-P) to N-acetylglucosamine-6-phosphate (GlcNAc-6-P). The protein is Putative N-acetylmannosamine-6-phosphate 2-epimerase of Escherichia coli O8 (strain IAI1).